The sequence spans 126 residues: Fluoride-specific ion channel FluC 1 (126 aa).

The next 3 membrane-spanning stretches (helical) occupy residues histidine 37–leucine 57, isoleucine 67–valine 87, and leucine 98–alanine 118. 2 residues coordinate Na(+): glycine 77 and serine 80.

This sequence belongs to the fluoride channel Fluc/FEX (TC 1.A.43) family.

The protein resides in the cell inner membrane. The enzyme catalyses fluoride(in) = fluoride(out). Its activity is regulated as follows. Na(+) is not transported, but it plays an essential structural role and its presence is essential for fluoride channel function. In terms of biological role, fluoride-specific ion channel. Important for reducing fluoride concentration in the cell, thus reducing its toxicity. This chain is Fluoride-specific ion channel FluC 1, found in Parasynechococcus marenigrum (strain WH8102).